The sequence spans 126 residues: Large ribosomal subunit protein eL18 (126 aa).

This sequence belongs to the eukaryotic ribosomal protein eL18 family.

This Methanosarcina mazei (strain ATCC BAA-159 / DSM 3647 / Goe1 / Go1 / JCM 11833 / OCM 88) (Methanosarcina frisia) protein is Large ribosomal subunit protein eL18.